A 395-amino-acid polypeptide reads, in one-letter code: Elongation factor Tu (395 aa).

Residues 10-204 (KPHVNVGTIG…AVDEYIPEPV (195 aa)) enclose the tr-type G domain. The segment at 19-26 (GHVDHGKT) is G1. 19 to 26 (GHVDHGKT) contacts GTP. T26 is a Mg(2+) binding site. A G2 region spans residues 60–64 (GITIA). The segment at 81-84 (DCPG) is G3. GTP-binding positions include 81 to 85 (DCPGH) and 136 to 139 (NKVD). The segment at 136 to 139 (NKVD) is G4. Residues 174–176 (SAL) form a G5 region.

It belongs to the TRAFAC class translation factor GTPase superfamily. Classic translation factor GTPase family. EF-Tu/EF-1A subfamily. As to quaternary structure, monomer.

The protein resides in the cytoplasm. The enzyme catalyses GTP + H2O = GDP + phosphate + H(+). GTP hydrolase that promotes the GTP-dependent binding of aminoacyl-tRNA to the A-site of ribosomes during protein biosynthesis. The chain is Elongation factor Tu from Exiguobacterium sp. (strain ATCC BAA-1283 / AT1b).